We begin with the raw amino-acid sequence, 845 residues long: Protein P (845 aa).

Positions 1 to 179 are terminal protein domain (TP); the sequence is MPLSYQHFRK…FCGSPYSWEQ (179 aa). The interval 180–348 is spacer; the sequence is ELHHGRSVTK…YCLSHLVNLL (169 aa). Disordered stretches follow at residues 186-205, 222-245, and 288-318; these read SVTK…QPSG, QPRL…SGSI, and YSHL…RSQS. Over residues 289 to 301 the composition is skewed to polar residues; that stretch reads SHLSTSKRQSSSG. The segment at 349-692 is polymerase/reverse transcriptase domain (RT); the sequence is EDWGPCADHG…YMNLYPVARQ (344 aa). In terms of domain architecture, Reverse transcriptase spans 359–602; sequence EHHIRIPRTP…YSLNFMGYII (244 aa). The Mg(2+) site is built by D431, D553, and D554.

The protein belongs to the hepadnaviridae P protein family.

The enzyme catalyses DNA(n) + a 2'-deoxyribonucleoside 5'-triphosphate = DNA(n+1) + diphosphate. It carries out the reaction Endonucleolytic cleavage to 5'-phosphomonoester.. With respect to regulation, activated by host HSP70 and HSP40 in vitro to be able to bind the epsilon loop of the pgRNA. Because deletion of the RNase H region renders the protein partly chaperone-independent, the chaperones may be needed indirectly to relieve occlusion of the RNA-binding site by this domain. Inhibited by several reverse-transcriptase inhibitors: Lamivudine, Adefovir and Entecavir. Multifunctional enzyme that converts the viral RNA genome into dsDNA in viral cytoplasmic capsids. This enzyme displays a DNA polymerase activity that can copy either DNA or RNA templates, and a ribonuclease H (RNase H) activity that cleaves the RNA strand of RNA-DNA heteroduplexes in a partially processive 3'- to 5'-endonucleasic mode. Neo-synthesized pregenomic RNA (pgRNA) are encapsidated together with the P protein, and reverse-transcribed inside the nucleocapsid. Initiation of reverse-transcription occurs first by binding the epsilon loop on the pgRNA genome, and is initiated by protein priming, thereby the 5'-end of (-)DNA is covalently linked to P protein. Partial (+)DNA is synthesized from the (-)DNA template and generates the relaxed circular DNA (RC-DNA) genome. After budding and infection, the RC-DNA migrates in the nucleus, and is converted into a plasmid-like covalently closed circular DNA (cccDNA). The activity of P protein does not seem to be necessary for cccDNA generation, and is presumably released from (+)DNA by host nuclear DNA repair machinery. This Hepatitis B virus genotype A3 (isolate Cameroon/CMR711/1994) (HBV-A) protein is Protein P.